Consider the following 103-residue polypeptide: Large ribosomal subunit protein bL21 (103 aa).

Belongs to the bacterial ribosomal protein bL21 family. In terms of assembly, part of the 50S ribosomal subunit. Contacts protein L20.

Functionally, this protein binds to 23S rRNA in the presence of protein L20. The sequence is that of Large ribosomal subunit protein bL21 from Clostridioides difficile (strain 630) (Peptoclostridium difficile).